Consider the following 560-residue polypeptide: Membrane protein insertase YidC (560 aa).

6 helical membrane-spanning segments follow: residues 5-25 (IINL…WQYF), 334-354 (AIDF…MNFF), 357-377 (YVGN…LLMF), 431-451 (LPIL…YVTI), 476-496 (LFGL…WPIL), and 522-542 (FMPL…LIYW).

The protein belongs to the OXA1/ALB3/YidC family. Type 1 subfamily. As to quaternary structure, interacts with the Sec translocase complex via SecD. Specifically interacts with transmembrane segments of nascent integral membrane proteins during membrane integration.

The protein localises to the cell inner membrane. Required for the insertion and/or proper folding and/or complex formation of integral membrane proteins into the membrane. Involved in integration of membrane proteins that insert both dependently and independently of the Sec translocase complex, as well as at least some lipoproteins. Aids folding of multispanning membrane proteins. In Rickettsia prowazekii (strain Madrid E), this protein is Membrane protein insertase YidC.